We begin with the raw amino-acid sequence, 1658 residues long: Protein TIC 214 (1658 aa).

Helical transmembrane passes span 28–48 (FGLY…ILTI), 52–72 (LLGG…GQLI), 82–102 (IYVM…YMLF), 130–150 (IFLD…SPVF), 165–185 (ISFV…FINL), and 199–219 (VNYP…ILAL).

Belongs to the TIC214 family. Part of the Tic complex.

It localises to the plastid. The protein resides in the chloroplast inner membrane. In terms of biological role, involved in protein precursor import into chloroplasts. May be part of an intermediate translocation complex acting as a protein-conducting channel at the inner envelope. This is Protein TIC 214 from Huperzia lucidula (Shining clubmoss).